Here is a 259-residue protein sequence, read N- to C-terminus: Glutamate 5-kinase (259 aa).

K18 provides a ligand contact to ATP. Substrate is bound by residues S54, D141, and N153. An ATP-binding site is contributed by 173-174 (SD).

It belongs to the glutamate 5-kinase family.

It localises to the cytoplasm. It carries out the reaction L-glutamate + ATP = L-glutamyl 5-phosphate + ADP. The protein operates within amino-acid biosynthesis; L-proline biosynthesis; L-glutamate 5-semialdehyde from L-glutamate: step 1/2. Catalyzes the transfer of a phosphate group to glutamate to form L-glutamate 5-phosphate. The polypeptide is Glutamate 5-kinase (Clavibacter sepedonicus (Clavibacter michiganensis subsp. sepedonicus)).